The primary structure comprises 611 residues: UvrABC system protein C (611 aa).

The 79-residue stretch at 6 to 84 (NNPGVYRMFN…IKRLRPRFNV (79 aa)) folds into the GIY-YIG domain. Positions 194-229 (QSVKDHLAAAMQAASADLDFEHAAVYRDRLAALSHV) constitute a UVR domain.

This sequence belongs to the UvrC family. As to quaternary structure, interacts with UvrB in an incision complex.

The protein resides in the cytoplasm. In terms of biological role, the UvrABC repair system catalyzes the recognition and processing of DNA lesions. UvrC both incises the 5' and 3' sides of the lesion. The N-terminal half is responsible for the 3' incision and the C-terminal half is responsible for the 5' incision. This Brucella abortus (strain 2308) protein is UvrABC system protein C.